Consider the following 161-residue polypeptide: uncharacterized protein (161 aa).

This is an uncharacterized protein from Lepidoptera (butterflies and moths).